The primary structure comprises 30 residues: Scolopendra 20528.11 Da toxin (30 aa).

This sequence belongs to the CRISP family. Venom allergen 5-like subfamily. Contains 3 disulfide bonds. Expressed by the venom gland.

The protein localises to the secreted. The protein is Scolopendra 20528.11 Da toxin of Scolopendra angulata (Barbados giant red centipede).